A 249-amino-acid polypeptide reads, in one-letter code: Type I iodothyronine deiodinase (249 aa).

The Extracellular portion of the chain corresponds to 1-12 (MELPLPGLWLKR). The helical; Signal-anchor for type III membrane protein transmembrane segment at 13-33 (LWVLFQVALHVAMGKVLMTLF) threads the bilayer. Residues 34–249 (PGRVKQDILA…VRAVLEKLHS (216 aa)) are Cytoplasmic-facing. U126 is an active-site residue. Residue U126 is a non-standard amino acid, selenocysteine.

It belongs to the iodothyronine deiodinase family. Predominantly monomer. Can form homodimers but homodimerization is not essential for enzyme activity.

The protein resides in the cell membrane. Its subcellular location is the endoplasmic reticulum membrane. It localises to the basolateral cell membrane. The catalysed reaction is 3,3',5-triiodo-L-thyronine + iodide + A + H(+) = L-thyroxine + AH2. It catalyses the reaction 3,3',5'-triiodo-L-thyronine + iodide + A + H(+) = L-thyroxine + AH2. It carries out the reaction 3,3'-diiodo-L-thyronine + iodide + A + H(+) = 3,3',5'-triiodo-L-thyronine + AH2. The enzyme catalyses 3,3'-diiodo-L-thyronine + iodide + A + H(+) = 3,3',5-triiodo-L-thyronine + AH2. The catalysed reaction is 3'-iodo-L-thyronine + iodide + A + H(+) = 3',5'-diiodo-L-thyronine + AH2. It catalyses the reaction 3-iodo-L-thyronine + iodide + A + H(+) = 3,5-diiodo-L-thyronine + AH2. It carries out the reaction 3-iodo-L-thyronine + iodide + A + H(+) = 3,3'-diiodo-L-thyronine + AH2. The enzyme catalyses 3,3'-diiodothyronamine + iodide + A + H(+) = 3,3',5'-triiodothyronamine + AH2. The catalysed reaction is 3'-iodothyronamine + iodide + A + H(+) = 3',5'-diiodothyronamine + AH2. It catalyses the reaction 3-iodothyronamine + iodide + A + H(+) = 3,3'-diiodothyronamine + AH2. It carries out the reaction 3,3'-diiodothyronamine + iodide + A + H(+) = 3,3',5-triiodothyronamine + AH2. The enzyme catalyses 3-iodothyronamine + iodide + A + H(+) = 3,5-diiodothyronamine + AH2. The catalysed reaction is 3,3'-diiodo-L-thyronine sulfate + iodide + A + H(+) = 3,3',5'-triiodo-L-thyronine sulfate + AH2. It catalyses the reaction 3,3',5'-triiodo-L-thyronine sulfate + iodide + A + H(+) = L-thyroxine sulfate + AH2. It carries out the reaction 3,3'-diiodo-L-thyronine sulfate + iodide + A + H(+) = 3,3',5-triiodo-L-thyronine sulfate + AH2. In terms of biological role, plays a crucial role in the metabolism of thyroid hormones (TH) and has specific roles in TH activation and inactivation by deiodination. Catalyzes the deiodination of L-thyroxine (T4) to 3,5,3'-triiodothyronine (T3) and 3,3',5'-triiodothyronine (rT3) to 3,3'-diiodothyronine (3,3'-T2) via outer-ring deiodination (ORD). Catalyzes the deiodination of T4 to rT3, T3 to 3,3'-T2, 3,5-diiodothyronine (3,5-T2) to 3-monoiodothyronine (3-T1) and 3,3'-T2 to 3-T1 via inner-ring deiodination (IRD). Catalyzes the deiodination of 3',5'-diiodothyronine (3',5'-T2) to 3'-monoiodothyronine (3'-T1) via ORD. Catalyzes the phenolic ring deiodinations of 3,3',5'-triiodothyronamine, 3',5'-diiodothyronamine and 3,3'-diiodothyronamine as well as tyrosyl ring deiodinations of 3,5,3'-triiodothyronamine and 3,5-diiodothyronamine. Catalyzes the deiodination of L-thyroxine sulfate and 3,3',5-triiodo-L-thyronine sulfate via IRD and of 3,3',5'-triiodo-L-thyronine sulfate via ORD. This chain is Type I iodothyronine deiodinase (DIO1), found in Sus scrofa (Pig).